Here is a 91-residue protein sequence, read N- to C-terminus: Metalloproteinase inhibitor 2 (91 aa).

Residues 1–91 form the NTR domain; the sequence is KAVSEKEVDS…FIVPWDTLST (91 aa).

This sequence belongs to the protease inhibitor I35 (TIMP) family. Post-translationally, the activity of TIMP2 is dependent on the presence of disulfide bonds.

It is found in the secreted. Its function is as follows. Complexes with metalloproteinases (such as collagenases) and irreversibly inactivates them. The polypeptide is Metalloproteinase inhibitor 2 (TIMP2) (Equus caballus (Horse)).